The primary structure comprises 379 residues: Type II methyltransferase M.SsoII (379 aa).

The HTH cro/C1-type domain maps to 9–66; that stretch reads IKEKRERLHMTQKEFADALGLSKYGDRTIRRWERGETKPTGAELKAVIDFPDTPPYPN. The SAM-dependent MTase C5-type domain occupies 72–379; that stretch reads YRMIDLFAGI…AEKIISTLDS (308 aa). The active site involves Cys-142.

Belongs to the class I-like SAM-binding methyltransferase superfamily. C5-methyltransferase family.

It catalyses the reaction a 2'-deoxycytidine in DNA + S-adenosyl-L-methionine = a 5-methyl-2'-deoxycytidine in DNA + S-adenosyl-L-homocysteine + H(+). Its function is as follows. A methylase that recognizes the double-stranded sequence 5'-CCNGG-3', methylates C-2 on both strands, and protects the DNA from cleavage by the SsoII endonuclease. This Shigella sonnei protein is Type II methyltransferase M.SsoII (ssoIIM).